A 403-amino-acid chain; its full sequence is Formin-like protein 21b (403 aa).

An FH2 domain is found at 1–380 (MELLFTATLL…KAAKEAEMEK (380 aa)). The disordered stretch occupies residues 373 to 403 (AKEAEMEKTKKRVSLTNKKASGVGEEESCLI).

This sequence belongs to the formin-like family. Class-II subfamily.

The protein is Formin-like protein 21b (FH21B) of Arabidopsis thaliana (Mouse-ear cress).